Here is a 343-residue protein sequence, read N- to C-terminus: Flap endonuclease 1 (343 aa).

The N-domain stretch occupies residues 1–98 (MGVPIGDLVP…KELEKRREAR (98 aa)). Positions 27, 80, 152, 154, 173, 175, and 236 each coordinate Mg(2+). The interval 116-258 (EARKYAQRAT…KALEIVRYSR (143 aa)) is I-domain. The segment at 330 to 338 (RQSTLESWF) is interaction with PCNA.

This sequence belongs to the XPG/RAD2 endonuclease family. FEN1 subfamily. As to quaternary structure, interacts with PCNA. PCNA stimulates the nuclease activity without altering cleavage specificity. The cofactor is Mg(2+).

Its function is as follows. Structure-specific nuclease with 5'-flap endonuclease and 5'-3' exonuclease activities involved in DNA replication and repair. During DNA replication, cleaves the 5'-overhanging flap structure that is generated by displacement synthesis when DNA polymerase encounters the 5'-end of a downstream Okazaki fragment. Binds the unpaired 3'-DNA end and kinks the DNA to facilitate 5' cleavage specificity. Cleaves one nucleotide into the double-stranded DNA from the junction in flap DNA, leaving a nick for ligation. Also involved in the base excision repair (BER) pathway. Acts as a genome stabilization factor that prevents flaps from equilibrating into structures that lead to duplications and deletions. Also possesses 5'-3' exonuclease activity on nicked or gapped double-stranded DNA. The sequence is that of Flap endonuclease 1 from Pyrococcus horikoshii (strain ATCC 700860 / DSM 12428 / JCM 9974 / NBRC 100139 / OT-3).